Consider the following 307-residue polypeptide: Glycerol-3-phosphate dehydrogenase [NAD(P)+] (307 aa).

NADPH-binding residues include Trp14, Arg34, Arg35, and Lys82. Sn-glycerol 3-phosphate-binding residues include Lys82 and Gly110. NADPH is bound at residue Ser114. Sn-glycerol 3-phosphate is bound by residues Lys165, Asp218, Ser228, Arg229, and Asn230. Lys165 acts as the Proton acceptor in catalysis. Arg229 is an NADPH binding site. Residue Glu255 coordinates NADPH.

The protein belongs to the NAD-dependent glycerol-3-phosphate dehydrogenase family.

Its subcellular location is the cytoplasm. It catalyses the reaction sn-glycerol 3-phosphate + NAD(+) = dihydroxyacetone phosphate + NADH + H(+). It carries out the reaction sn-glycerol 3-phosphate + NADP(+) = dihydroxyacetone phosphate + NADPH + H(+). It functions in the pathway membrane lipid metabolism; glycerophospholipid metabolism. Its function is as follows. Catalyzes the reduction of the glycolytic intermediate dihydroxyacetone phosphate (DHAP) to sn-glycerol 3-phosphate (G3P), the key precursor for phospholipid synthesis. In Nostoc sp. (strain PCC 7120 / SAG 25.82 / UTEX 2576), this protein is Glycerol-3-phosphate dehydrogenase [NAD(P)+].